The following is a 204-amino-acid chain: Cytochrome b6 (204 aa).

A helical membrane pass occupies residues 23-43; the sequence is YCLGGITLTSFLVQVATGSAM. Cysteine 24 contributes to the heme c binding site. Residues histidine 75 and histidine 89 each coordinate heme b. 3 helical membrane passes run 81 to 101, 107 to 127, and 136 to 157; these read MMVL…GFKK, WVTG…GYSL, and AVKI…LVEL. The heme b site is built by histidine 176 and histidine 191. The helical transmembrane segment at 177–197 threads the bilayer; the sequence is TFILPLLTAVFMPMHFLMIRK.

This sequence belongs to the cytochrome b family. PetB subfamily. The 4 large subunits of the cytochrome b6-f complex are cytochrome b6, subunit IV (17 kDa polypeptide, PetD), cytochrome f and the Rieske protein, while the 4 small subunits are PetG, PetL, PetM and PetN. The complex functions as a dimer. The cofactor is heme b. It depends on heme c as a cofactor.

Its subcellular location is the plastid. The protein resides in the chloroplast thylakoid membrane. Its function is as follows. Component of the cytochrome b6-f complex, which mediates electron transfer between photosystem II (PSII) and photosystem I (PSI), cyclic electron flow around PSI, and state transitions. This Picea abies (Norway spruce) protein is Cytochrome b6.